The chain runs to 382 residues: Telomere-binding protein OPG082 (382 aa).

This sequence belongs to the orthopoxvirus OPG082 family.

It is found in the virion. Its function is as follows. Binds to the hairpin form of the viral telomeric sequence. Might direct genome encapsidation into the virus particle. The polypeptide is Telomere-binding protein OPG082 (OPG082) (Variola virus (isolate Human/India/Ind3/1967) (VARV)).